Reading from the N-terminus, the 117-residue chain is Ribosome-binding factor A (117 aa).

It belongs to the RbfA family. Monomer. Binds 30S ribosomal subunits, but not 50S ribosomal subunits or 70S ribosomes.

The protein resides in the cytoplasm. In terms of biological role, one of several proteins that assist in the late maturation steps of the functional core of the 30S ribosomal subunit. Associates with free 30S ribosomal subunits (but not with 30S subunits that are part of 70S ribosomes or polysomes). Required for efficient processing of 16S rRNA. May interact with the 5'-terminal helix region of 16S rRNA. This Leuconostoc citreum (strain KM20) protein is Ribosome-binding factor A.